The following is a 218-amino-acid chain: DNA replication complex GINS protein psf3 (218 aa).

Gly residues predominate over residues 147–163; it reads GGGSSYHGRDGGGAGGK. The tract at residues 147 to 182 is disordered; it reads GGGSSYHGRDGGGAGGKGKGKATKDDNASNLGVGGA.

This sequence belongs to the GINS3/PSF3 family. Component of the GINS complex which is a heterotetramer of div-26/sld5, drc-1/psf1, drc-2/psf2 and drc-3/psf3.

It is found in the nucleus. In terms of biological role, the GINS complex plays an essential role in the initiation of DNA replication. The sequence is that of DNA replication complex GINS protein psf3 (drc-3) from Neurospora crassa (strain ATCC 24698 / 74-OR23-1A / CBS 708.71 / DSM 1257 / FGSC 987).